The sequence spans 361 residues: MKQSIRDKLEHLAGRLAELDRELSSEDATRDMNAFRDLSRERAELEPVVALYGAYRQAEQDCATARELLDDPEMQELGRSELEAGEARIAALDGDLQRALLPRDPNDERNLFLEIRAGTGGDEAALFAGDLLRMYSRYAERQRWRVEIVSSNPSDLGGYKEVIARIVGAGAYSRLKFESGGHRVQRIPVTETQGRIHTSACTVAVMPEADELAAVEINPADLRIDTFRASGAGGQHINKTDSAVRITHLPTGLVVECQDDRSQHRNKAQAMAVLAARLNDAQLRARQSAEAATRRSLIGSGDRSERIRTYNFPQGRVTDHRINLTLYKLDAVMQGELDELLAALVLEHQAEQLAALAEEGL.

The residue at position 235 (glutamine 235) is an N5-methylglutamine.

The protein belongs to the prokaryotic/mitochondrial release factor family. Post-translationally, methylated by PrmC. Methylation increases the termination efficiency of RF1.

The protein resides in the cytoplasm. In terms of biological role, peptide chain release factor 1 directs the termination of translation in response to the peptide chain termination codons UAG and UAA. The polypeptide is Peptide chain release factor 1 (Azoarcus sp. (strain BH72)).